Reading from the N-terminus, the 1009-residue chain is MTGHTGDVSQVHDIEILALNPTVNKHATFKPTIVSKKDKENWARLDHCKKGCELKNDFEDVKPTTLTERGALFESARCLKCADAPCQKGCPTQLDIKSFISSISTKNYYGAAKTIFSDNPLGLTCGMVCPVSSLCQYGCNLAATEEGPINIGGLQQFATEVFKKMNIPQIRDPSLTPLSQLPESYKAKIALIGCGPTSISCATFLGRLGYTDVTIFEKEQYLGGLSSSEIPNYRLNYEVVEFEIKLMKDLGVKVEYGKRLGENGFTVESLQKQGYEAIYLGIGMPEPKIDPVFNELTSDQGFFSSKEFLPKVSKASKAGMCGCKSQLPQLNGRVIVLGAGDTAFDCATSAFRCGASRVTVCFRRGFSDMRAVPEEVDIAKDERCEFLPYVLPKQVIKRDGKVVAMEFYKTEKGDDGNYSVDEDQFFRVKCDYIISAFGSQIGSVAESCSPLQFNKWGTADIDPMTMTSKHAEWLFCGGDLVGNGTTVEAVNDGKTASWNIHKYLQSLHGIPIPDGPPQLPNFFTPIDLVDISVEMCGMKFPNPFGLASATPATSAAMIRRSFEQGWGFAVTKTFSLDKDLVTNVSPRIVRGTTSGHHFGPGQGAFLNIELISEKTCHYWCKAIGELKRDFPDRIVIASIMCGFNKEDWTQLAKMAEASGADGIELNLSCPHGMGEKGMGLACGQDTELVFHICQWVRAATRLPFFAKLTPNVTEIKEIAKAAHDGGADGVTAINTVSGLMGLKGDSNAWPAIGDEKRTTYGGVSGNATRPIALRAVSSIRKSLPDYPIMATGGADSADATIQFLHCGASVVQICSSVQNQDFTVVQDYITGLKTYLYMQSREDLLQWDGQSPPNEIINKNPKLKGLPKFGKYLLERNRIDTEEKQNIDLQKVKNPLVPSPNPTHPVPSLKDQINRAIPRIGRHDDLKRDQQVVALIDEDKCINCGKCYMTCNDSGYQAIKFDGKTHIPLVTDLCTGCDLCLSVCPVPDCITMVPRETIYVPDRGLTVQN.

The 31-residue stretch at 69–99 (RGALFESARCLKCADAPCQKGCPTQLDIKSF) folds into the 4Fe-4S ferredoxin-type 1 domain. Positions 78, 81, 86, and 90 each coordinate [4Fe-4S] cluster. Position 128 (Val-128) interacts with FAD. Residues Cys-129, Cys-135, Cys-139, and Gln-155 each contribute to the [4Fe-4S] cluster site. FAD is bound by residues 193 to 197 (GCGPT), 217 to 225 (EKEQYLGGL), Arg-234, and Leu-260. NADP(+) contacts are provided by residues 339 to 342 (AGDT), 363 to 364 (RR), Arg-370, 436 to 438 (AFG), and 479 to 484 (DLVGNG). 478–486 (GDLVGNGTT) is a binding site for FAD. Residues Ser-548 and 572-573 (KT) each bind FMN. Substrate-binding positions include Asn-607 and 666–668 (NLS). The active-site Proton acceptor is the Cys-669. Residue Lys-707 participates in FMN binding. Residue 734 to 735 (NT) coordinates substrate. FMN is bound by residues Gly-765, 791-793 (TGG), and 814-815 (CS). 4Fe-4S ferredoxin-type domains are found at residues 932–964 (VVALIDEDKCINCGKCYMTCNDSGYQAIKFDGK) and 965–995 (THIPLVTDLCTGCDLCLSVCPVPDCITMVPR). The [4Fe-4S] cluster site is built by Cys-941, Cys-944, Cys-947, Cys-951, Cys-974, Cys-977, Cys-980, and Cys-984.

Belongs to the dihydropyrimidine dehydrogenase family. As to quaternary structure, homodimer. [4Fe-4S] cluster serves as cofactor. The cofactor is FAD. It depends on FMN as a cofactor.

The protein resides in the cytoplasm. The catalysed reaction is 5,6-dihydrouracil + NADP(+) = uracil + NADPH + H(+). It functions in the pathway amino-acid biosynthesis; beta-alanine biosynthesis. Involved in pyrimidine base degradation. Catalyzes the reduction of uracil and thymine. This Dictyostelium discoideum (Social amoeba) protein is Dihydropyrimidine dehydrogenase [NADP(+)] (pyd1).